Reading from the N-terminus, the 465-residue chain is SHC-transforming protein 1 (465 aa).

Residues 44–227 (MGPGVPYLVR…AGFDGSAWDE (184 aa)) enclose the PID domain. Residues 228–369 (EEEELPDHAY…SMEDQLKREP (142 aa)) are CH1. Residues 281–315 (VSGAEQDSRKMQPTLQGRERFPVPCSRPPNRPDLF) form a disordered region. The region spanning 370-461 (WYQGKMSRKE…GSELCLQQPV (92 aa)) is the SH2 domain.

In terms of assembly, interacts with grb2. In terms of tissue distribution, highly expressed in oocytes and embryo. Also expressed in liver. Detected in ovary, testis and heart and to a lesser extent in liver (at protein level).

The protein resides in the cytoplasm. In terms of biological role, implicated in ras-dependent oocyte maturation induced by insulin/IGF1. This Xenopus laevis (African clawed frog) protein is SHC-transforming protein 1 (shc1).